We begin with the raw amino-acid sequence, 216 residues long: Adenylate kinase (216 aa).

10 to 15 is a binding site for ATP; the sequence is GAGKGT. The segment at 30–59 is NMP; sequence STGDMLRAAVKAETPVGLKAKAVMEAGQLV. AMP is bound by residues threonine 31, arginine 36, 57–59, 85–88, and glutamine 92; these read QLV and GYPR. The tract at residues 126 to 164 is LID; it reads GRYTCATCGKGYHDKFEKPAVEGTCDKCGGHEFKRRPDD. Arginine 127 lines the ATP pocket. Residues cysteine 130, cysteine 133, cysteine 150, and cysteine 153 each contribute to the Zn(2+) site. AMP-binding residues include arginine 161 and arginine 172. Position 200 (alanine 200) interacts with ATP.

This sequence belongs to the adenylate kinase family. As to quaternary structure, monomer.

It localises to the cytoplasm. It carries out the reaction AMP + ATP = 2 ADP. The protein operates within purine metabolism; AMP biosynthesis via salvage pathway; AMP from ADP: step 1/1. Its function is as follows. Catalyzes the reversible transfer of the terminal phosphate group between ATP and AMP. Plays an important role in cellular energy homeostasis and in adenine nucleotide metabolism. The sequence is that of Adenylate kinase from Novosphingobium aromaticivorans (strain ATCC 700278 / DSM 12444 / CCUG 56034 / CIP 105152 / NBRC 16084 / F199).